The primary structure comprises 580 residues: Cis-3-hydroxy-L-proline dehydratase (580 aa).

Catalysis depends on S66, which acts as the Proton acceptor.

It belongs to the AcnX family. In terms of assembly, monomer. It depends on Fe(3+) as a cofactor.

It catalyses the reaction cis-3-hydroxy-L-proline = 1-pyrroline-2-carboxylate + H2O. With respect to regulation, inhibited by Zn(2+), Cd(2+) and Hg(2+), but not by Co(2+), Ni(2+), Mn(2+), Sr(2+), Mg(2+), or Fe(3+). Inhibited by pyrrole-2-carboxylate and its derivative 2-thiophenecarboxylate, but not by trans-aconitate, fluorocitrate and oxalomalate, which are typical inhibitors of the aconitase enzymes. In terms of biological role, catalyzes the dehydration of cis-3-hydroxy-L-proline (c3LHyp) to Delta(1)-pyrroline-2-carboxylate (Pyr2C). Also has activity with (2S,3S,4R)-3,4-dihydroxyproline as substrate, albeit at about 300-fold lower rate. No activity with L-proline, trans-4-hydroxy-L-proline (t4LHyp), cis-4-hydroxy-L-proline (c4LHyp), trans-3-hydroxy-L-proline (t3LHyp), D-proline, cis-4-hydroxy-D-proline (c4DHyp), trans-4-hydroxy-D-proline (t4DHyp) or L-serine as substrates. No hydro-lyase activity with citrate or cis-acotinate. Does not catalyze 2-epimerization of c3LHyp to trans-3-hydroxy-D-proline (t3DHyp). Involved in a degradation pathway that converts c3LHyp to L-proline, which would allow P.aeruginosa to grow on c3LHyp as a sole carbon source. The sequence is that of Cis-3-hydroxy-L-proline dehydratase from Pseudomonas aeruginosa (strain ATCC 15692 / DSM 22644 / CIP 104116 / JCM 14847 / LMG 12228 / 1C / PRS 101 / PAO1).